The primary structure comprises 463 residues: Probable glycosyltransferase 3 (463 aa).

Residues methionine 1 to glutamine 20 are disordered. The Cytoplasmic portion of the chain corresponds to methionine 1–threonine 24. A compositionally biased stretch (low complexity) spans proline 9–glutamine 20. A helical; Signal-anchor for type II membrane protein membrane pass occupies residues phenylalanine 25–glycine 47. Residues isoleucine 48 to serine 463 lie on the Lumenal side of the membrane. Residues glutamate 82–asparagine 125 are disordered. The segment covering threonine 87 to leucine 99 has biased composition (acidic residues). A compositionally biased stretch (low complexity) spans alanine 103 to alanine 118. 3 N-linked (GlcNAc...) asparagine glycosylation sites follow: asparagine 110, asparagine 125, and asparagine 442.

This sequence belongs to the glycosyltransferase 34 family.

The protein localises to the golgi apparatus membrane. Functionally, probable glycosyltransferase that may be involved in the biosynthesis of xyloglucan. The sequence is that of Probable glycosyltransferase 3 from Oryza sativa subsp. indica (Rice).